The primary structure comprises 300 residues: 33 kDa chaperonin (300 aa).

2 disulfide bridges follow: cysteine 235/cysteine 237 and cysteine 269/cysteine 272.

This sequence belongs to the HSP33 family. In terms of processing, under oxidizing conditions two disulfide bonds are formed involving the reactive cysteines. Under reducing conditions zinc is bound to the reactive cysteines and the protein is inactive.

The protein localises to the cytoplasm. In terms of biological role, redox regulated molecular chaperone. Protects both thermally unfolding and oxidatively damaged proteins from irreversible aggregation. Plays an important role in the bacterial defense system toward oxidative stress. In Pseudomonas fluorescens (strain SBW25), this protein is 33 kDa chaperonin.